Reading from the N-terminus, the 485-residue chain is RAC-beta serine/threonine-protein kinase B (485 aa).

Residues M5–N109 enclose the PH domain. Residues S132 and S135 are each glycosylated (O-linked (GlcNAc) serine). Positions F156–F413 constitute a Protein kinase domain. Residues L162 to V170 and K185 contribute to the ATP site. D279 serves as the catalytic Proton acceptor. T310 carries O-linked (GlcNAc) threonine glycosylation. Phosphothreonine is present on T313. T317 carries O-linked (GlcNAc) threonine glycosylation. The AGC-kinase C-terminal domain maps to A414 to E485. The disordered stretch occupies residues L454–E485. Basic and acidic residues predominate over residues D458–P472. S478 carries the post-translational modification Phosphoserine. S478 is a glycosylation site (O-linked (GlcNAc) serine; alternate).

Belongs to the protein kinase superfamily. AGC Ser/Thr protein kinase family. RAC subfamily. In terms of processing, phosphorylation on Thr-313 and Ser-478 is required for full activity. Phosphorylation of the activation loop at Thr-313 by PDPK1/PDK1 is a prerequisite for full activation. Phosphorylation by mTORC2 at Ser-478 in response to growth factors plays a key role in AKT1 activation by facilitating subsequent phosphorylation of the activation loop by PDPK1/PDK1.

The catalysed reaction is L-seryl-[protein] + ATP = O-phospho-L-seryl-[protein] + ADP + H(+). It catalyses the reaction L-threonyl-[protein] + ATP = O-phospho-L-threonyl-[protein] + ADP + H(+). With respect to regulation, two specific sites, one in the kinase domain (Thr-313) and the other in the C-terminal regulatory region (Ser-478), need to be phosphorylated for its full activation. Functionally, akt2-b is one of several closely related serine/threonine-protein kinases known as the AKT kinase, and which regulate many processes including metabolism, proliferation, cell survival, growth and angiogenesis. This is mediated through serine and/or threonine phosphorylation of a range of downstream substrates. Over 100 substrate candidates have been reported so far, but for most of them, no isoform specificity has been reported. May be involved in the inhibition of ciliogenesis. The sequence is that of RAC-beta serine/threonine-protein kinase B (akt2-b) from Xenopus laevis (African clawed frog).